Consider the following 833-residue polypeptide: Leucine--tRNA ligase (833 aa).

The 'HIGH' region signature appears at Pro-41–His-52. The 'KMSKS' region motif lies at Lys-610 to Ser-614. Lys-613 contacts ATP.

This sequence belongs to the class-I aminoacyl-tRNA synthetase family.

The protein resides in the cytoplasm. It carries out the reaction tRNA(Leu) + L-leucine + ATP = L-leucyl-tRNA(Leu) + AMP + diphosphate. This chain is Leucine--tRNA ligase, found in Streptococcus gordonii (strain Challis / ATCC 35105 / BCRC 15272 / CH1 / DL1 / V288).